The sequence spans 380 residues: PqqA peptide cyclase (380 aa).

Residues 12 to 228 (FGIPLAVLLE…EEARERLKGR (217 aa)) form the Radical SAM core domain. Cys26, Cys30, and Cys33 together coordinate [4Fe-4S] cluster.

The protein belongs to the radical SAM superfamily. PqqE family. As to quaternary structure, interacts with PqqD. The interaction is necessary for activity of PqqE. The cofactor is [4Fe-4S] cluster.

It catalyses the reaction [PQQ precursor protein] + S-adenosyl-L-methionine = E-Y cross-linked-[PQQ precursor protein] + 5'-deoxyadenosine + L-methionine + H(+). It participates in cofactor biosynthesis; pyrroloquinoline quinone biosynthesis. Functionally, catalyzes the cross-linking of a glutamate residue and a tyrosine residue in the PqqA protein as part of the biosynthesis of pyrroloquinoline quinone (PQQ). The polypeptide is PqqA peptide cyclase (Bradyrhizobium diazoefficiens (strain JCM 10833 / BCRC 13528 / IAM 13628 / NBRC 14792 / USDA 110)).